A 169-amino-acid polypeptide reads, in one-letter code: ATP-dependent Clp protease adapter protein CLPS2, chloroplastic (169 aa).

A chloroplast-targeting transit peptide spans 1–33; that stretch reads MLATRCKCNLPSRSFVAPARSVRTRALHVEGRF. Residues 67-92 are disordered; that stretch reads DAKTDNGNNGSNTDKDKKSPPGGGNY.

It belongs to the ClpS family.

It localises to the plastid. Its subcellular location is the chloroplast stroma. Its function is as follows. Small adapter protein that modulate the activity of plastid Clp protease system (CLPC). Probably involved in substrate selection for plastid CLPC. The chain is ATP-dependent Clp protease adapter protein CLPS2, chloroplastic from Chlamydomonas reinhardtii (Chlamydomonas smithii).